The following is a 290-amino-acid chain: MGKDEVMESGGAAGEFAAKDYTDPPPAPLIDAAELGSWSLYRAVIAEFIATLLFLYITVATVIGYKHQTDASASGADAACGGVGVLGIAWAFGGMIFILVYCTAGISGGHINPAVTFGLFLARKVSLVRAILYIVAQCLGAICGVGLVKAFQSAYFNRYGGGANTLAAGYSKGTGLAAEIIGTFVLVYTVFSATDPKRNARDSHVPVLAPLPIGFAVFMVHLATIPITGTGINPARSIGAAVIFNNEKAWHNHWIFWVGPFVGAAIAAFYHQYILRAGAIKALGSFRSNA.

A run of 2 helical transmembrane segments spans residues 43-63 (AVIAEFIATLLFLYITVATVI) and 80-100 (CGGVGVLGIAWAFGGMIFILV). The short motif at 112–114 (NPA) is the NPA 1 element. Transmembrane regions (helical) follow at residues 131–151 (ILYIVAQCLGAICGVGLVKAF), 173–193 (GTGLAAEIIGTFVLVYTVFSA), and 207–227 (VLAPLPIGFAVFMVHLATIPI). The NPA 2 signature appears at 233–235 (NPA). The helical transmembrane segment at 255-275 (IFWVGPFVGAAIAAFYHQYIL) threads the bilayer.

It belongs to the MIP/aquaporin (TC 1.A.8) family. PIP (TC 1.A.8.11) subfamily. As to expression, expressed in roots, leaves and anthers.

The protein resides in the cell membrane. Functionally, aquaporins facilitate the transport of water and small neutral solutes across cell membranes. This chain is Probable aquaporin PIP2-1 (PIP2-1), found in Oryza sativa subsp. japonica (Rice).